The following is a 451-amino-acid chain: mRNA cleavage and polyadenylation factor CLP1 (451 aa).

ATP is bound by residues E33, K72, and 133-138 (NTGKTA).

Belongs to the Clp1 family. Clp1 subfamily. Component of a pre-mRNA cleavage factor complex. Interacts directly with PCF11.

It localises to the nucleus. In terms of biological role, required for endonucleolytic cleavage during polyadenylation-dependent pre-mRNA 3'-end formation. The chain is mRNA cleavage and polyadenylation factor CLP1 from Vanderwaltozyma polyspora (strain ATCC 22028 / DSM 70294 / BCRC 21397 / CBS 2163 / NBRC 10782 / NRRL Y-8283 / UCD 57-17) (Kluyveromyces polysporus).